A 139-amino-acid chain; its full sequence is Aspartate 1-decarboxylase (139 aa).

The active-site Schiff-base intermediate with substrate; via pyruvic acid is the Ser25. Position 25 is a pyruvic acid (Ser) (Ser25). Thr57 is a binding site for substrate. Tyr58 acts as the Proton donor in catalysis. Residue 73 to 75 participates in substrate binding; that stretch reads GAA. The tract at residues 117 to 139 is disordered; it reads TGSDPADAPAGSGLLRGDRPAGR.

The protein belongs to the PanD family. In terms of assembly, heterooctamer of four alpha and four beta subunits. It depends on pyruvate as a cofactor. In terms of processing, is synthesized initially as an inactive proenzyme, which is activated by self-cleavage at a specific serine bond to produce a beta-subunit with a hydroxyl group at its C-terminus and an alpha-subunit with a pyruvoyl group at its N-terminus.

The protein resides in the cytoplasm. It catalyses the reaction L-aspartate + H(+) = beta-alanine + CO2. It functions in the pathway cofactor biosynthesis; (R)-pantothenate biosynthesis; beta-alanine from L-aspartate: step 1/1. Catalyzes the pyruvoyl-dependent decarboxylation of aspartate to produce beta-alanine. The polypeptide is Aspartate 1-decarboxylase (Nocardioides sp. (strain ATCC BAA-499 / JS614)).